We begin with the raw amino-acid sequence, 49 residues long: Large ribosomal subunit protein eL40 (49 aa).

The protein belongs to the eukaryotic ribosomal protein eL40 family.

This Haloquadratum walsbyi (strain DSM 16790 / HBSQ001) protein is Large ribosomal subunit protein eL40.